The sequence spans 398 residues: Subtilisin-like protease CPC735_015300 (398 aa).

An N-terminal signal peptide occupies residues 1–19 (MGFIKTLSLSLAAASAANA). The propeptide occupies 20 to 116 (AKILSPSRPD…IEHDHVVRLT (97 aa)). The Inhibitor I9 domain occupies 35–115 (QYIVVMKDGV…FIEHDHVVRL (81 aa)). The region spanning 126 to 398 (TWGLGRVSHQ…NKLTYNGNGQ (273 aa)) is the Peptidase S8 domain. Catalysis depends on charge relay system residues aspartate 158 and histidine 189. An N-linked (GlcNAc...) asparagine glycan is attached at asparagine 250. Serine 344 acts as the Charge relay system in catalysis. N-linked (GlcNAc...) asparagine glycosylation occurs at asparagine 362.

It belongs to the peptidase S8 family.

The protein localises to the secreted. Its function is as follows. Secreted subtilisin-like serine protease with keratinolytic activity that contributes to pathogenicity. This Coccidioides posadasii (strain C735) (Valley fever fungus) protein is Subtilisin-like protease CPC735_015300.